The chain runs to 126 residues: Large ribosomal subunit protein eL18 (126 aa).

This sequence belongs to the eukaryotic ribosomal protein eL18 family.

This Methanosarcina acetivorans (strain ATCC 35395 / DSM 2834 / JCM 12185 / C2A) protein is Large ribosomal subunit protein eL18.